A 481-amino-acid polypeptide reads, in one-letter code: Protein NRT1/ PTR FAMILY 1.3 (481 aa).

The next 12 helical transmembrane spans lie at 32-52 (LAYF…YGMG), 57-77 (ANIL…GAFI), 88-108 (IGFG…TTII), 124-144 (LLKS…AGGV), 173-193 (FNWY…LLVF), 202-222 (IGFG…FAAS), 259-279 (IWST…FIVL), 302-322 (IFLV…IVPL), 333-353 (LGVM…ISAL), 374-394 (AMWL…NTIA), 422-442 (ASLI…GSWI), and 451-471 (LDYY…YFVW).

Belongs to the major facilitator superfamily. Proton-dependent oligopeptide transporter (POT/PTR) (TC 2.A.17) family. In terms of tissue distribution, expressed in roots.

The protein resides in the membrane. This is Protein NRT1/ PTR FAMILY 1.3 (NPF1.3) from Arabidopsis thaliana (Mouse-ear cress).